A 467-amino-acid polypeptide reads, in one-letter code: Gamma-aminobutyric acid receptor subunit gamma-3 (467 aa).

The signal sequence occupies residues 1–17 (MAAKLLLLLCLFSGLHA). Residues 18–256 (RSRRVEEDDS…FELSRRMGYF (239 aa)) are Extracellular-facing. N-linked (GlcNAc...) asparagine glycosylation occurs at Asn110. Residues Cys171 and Cys185 are joined by a disulfide bond. Asn228 carries an N-linked (GlcNAc...) asparagine glycan. Residues 257-277 (TIQTYIPCILTVVLSWVSFWI) form a helical membrane-spanning segment. The Cytoplasmic portion of the chain corresponds to 278-283 (KKDATP). Residues 284 to 303 (ARTTLGITTVLTMTTLSTIA) form a helical membrane-spanning segment. Residues 304-311 (RKSLPRVS) are Extracellular-facing. The chain crosses the membrane as a helical span at residues 312–332 (YVTAMDLFVTVCFLFVFAALM). Over 333-446 (EYATLNYYSS…DVSELDSYSR (114 aa)) the chain is Cytoplasmic. A helical membrane pass occupies residues 447–467 (VFFPTSFLLFNLVYWVGYLYL).

This sequence belongs to the ligand-gated ion channel (TC 1.A.9) family. Gamma-aminobutyric acid receptor (TC 1.A.9.5) subfamily. GABRG3 sub-subfamily. Heteropentamer, formed by a combination of alpha (GABRA1-6), beta (GABRB1-3), gamma (GABRG1-3), delta (GABRD), epsilon (GABRE), rho (GABRR1-3), pi (GABRP) and theta (GABRQ) chains, each subunit exhibiting distinct physiological and pharmacological properties. Post-translationally, may be palmitoylated. In terms of tissue distribution, expressed in brain.

Its subcellular location is the postsynaptic cell membrane. It is found in the cell membrane. The enzyme catalyses chloride(in) = chloride(out). With respect to regulation, allosterically potentiated by alphaxalone. Allosterically inhibited by pregnenolone sulfate. Inhibited by zinc and lanthanum. Functionally, gamma subunit of the heteropentameric ligand-gated chloride channel gated by gamma-aminobutyric acid (GABA), a major inhibitory neurotransmitter in the brain. GABA-gated chloride channels, also named GABA(A) receptors (GABAAR), consist of five subunits arranged around a central pore and contain GABA active binding site(s) located at the alpha and beta subunit interface(s). When activated by GABA, GABAARs selectively allow the flow of chloride across the cell membrane down their electrochemical gradient. The polypeptide is Gamma-aminobutyric acid receptor subunit gamma-3 (Rattus norvegicus (Rat)).